The following is a 156-amino-acid chain: MAVLEIVKHPNEVLETPCERVINFDKKLVKLLKDMHETMLIADGVGLAAPQVGVSLQVAVVDIGDDTGKIELINPSILEKRGEQVGPEGCLSFPGLYGEVERADYIKVRAQNRRGKVFLLEAEGLLARAIQHEIDHLHGVLFTSKVTRYYEENELE.

The Fe cation site is built by C90 and H132. E133 is a catalytic residue. A Fe cation-binding site is contributed by H136.

Belongs to the polypeptide deformylase family. The cofactor is Fe(2+).

The enzyme catalyses N-terminal N-formyl-L-methionyl-[peptide] + H2O = N-terminal L-methionyl-[peptide] + formate. Its function is as follows. Removes the formyl group from the N-terminal Met of newly synthesized proteins. Requires at least a dipeptide for an efficient rate of reaction. N-terminal L-methionine is a prerequisite for activity but the enzyme has broad specificity at other positions. This chain is Peptide deformylase 1, found in Bacillus anthracis.